Reading from the N-terminus, the 821-residue chain is Calpain-3 (821 aa).

The disordered stretch occupies residues 7 to 37 (ASVAPRTAAEPRSPGPVPHPAQSKATEAGGG). Residues 74-417 (LYVDPEFPPD…FTKLEICNLT (344 aa)) enclose the Calpain catalytic domain. Catalysis depends on residues Cys129, His334, and Asn358. A domain III region spans residues 418–586 (ADALQSDKLQ…KRNLSEEVEN (169 aa)). The tract at residues 587–649 (TISVDRPVKK…QPGSSDQESE (63 aa)) is linker. Residues 609 to 652 (ANSNKELGVDQESEEGKGKTSPDKQKQSPQPQPGSSDQESEEQQ) form a disordered region. Residues 622–634 (EEGKGKTSPDKQK) show a composition bias toward basic and acidic residues. Low complexity predominate over residues 635-645 (QSPQPQPGSSD). 4 consecutive EF-hand domains span residues 649–683 (EEQQ…VVNK), 692–725 (FTLE…NKIK), 722–757 (NKIK…AGFH), and 787–821 (VRLE…TMYA). The domain IV stretch occupies residues 650–821 (EQQQFRNIFK…LEWLQLTMYA (172 aa)). 18 residues coordinate Ca(2+): Ala662, Asp665, Glu667, Glu672, Asp705, Asp707, Ser709, Lys711, Glu716, Asp735, Asp737, Ser739, Thr741, Glu746, Asp800, Asp802, Asp804, and Ile806.

Belongs to the peptidase C2 family. As to quaternary structure, homodimer; via EF-hand domain 4. Interacts with TTN/titin. Interacts with CMYA5; this interaction, which results in CMYA5 proteolysis, may protect CAPN3 from autolysis. Interacts with SIMC1. Interacts with UTP25; the interaction is required for CAPN3 translocation to the nucleolus. As to expression, isoform I is skeletal muscle specific.

The protein resides in the cytoplasm. Its subcellular location is the nucleus. It is found in the nucleolus. It catalyses the reaction Broad endopeptidase activity.. Its activity is regulated as follows. Activated by micromolar concentrations of calcium and inhibited by calpastatin. Functionally, calcium-regulated non-lysosomal thiol-protease. Proteolytically cleaves CTBP1 at 'His-409'. Mediates, with UTP25, the proteasome-independent degradation of p53/TP53. This chain is Calpain-3, found in Homo sapiens (Human).